A 410-amino-acid chain; its full sequence is Divergent protein kinase domain 1A (410 aa).

Residues 1 to 5 are Cytoplasmic-facing; that stretch reads MARLS. The helical transmembrane segment at 6–26 threads the bilayer; that stretch reads YVRIKYLFFSWLAVFIGSWVI. Topologically, residues 27–410 are lumenal; sequence YVRYNSYTEL…WKKISHTNDS (384 aa).

The protein belongs to the DIPK family. In terms of processing, among the many cysteines in the lumenal domain, most are probably involved in disulfide bonds.

Its subcellular location is the endoplasmic reticulum membrane. In Xenopus laevis (African clawed frog), this protein is Divergent protein kinase domain 1A (dipk1a).